The primary structure comprises 238 residues: Ribonuclease 3 (238 aa).

In terms of domain architecture, RNase III spans 8-135 (VAELERRIGY…LIAALYIDGG (128 aa)). Residue Glu-48 participates in Mg(2+) binding. Asp-52 is an active-site residue. Residues Asp-121 and Glu-124 each contribute to the Mg(2+) site. Residue Glu-124 is part of the active site. The 70-residue stretch at 161-230 (DPKTQLQEWV…AQCMLLKREG (70 aa)) folds into the DRBM domain.

Belongs to the ribonuclease III family. In terms of assembly, homodimer. It depends on Mg(2+) as a cofactor.

It localises to the cytoplasm. It carries out the reaction Endonucleolytic cleavage to 5'-phosphomonoester.. Functionally, digests double-stranded RNA. Involved in the processing of primary rRNA transcript to yield the immediate precursors to the large and small rRNAs (23S and 16S). Processes some mRNAs, and tRNAs when they are encoded in the rRNA operon. Processes pre-crRNA and tracrRNA of type II CRISPR loci if present in the organism. The sequence is that of Ribonuclease 3 from Phenylobacterium zucineum (strain HLK1).